Here is a 196-residue protein sequence, read N- to C-terminus: Pyridoxal 5'-phosphate synthase subunit PdxT (196 aa).

52-54 (GES) serves as a coordination point for L-glutamine. Catalysis depends on Cys-84, which acts as the Nucleophile. L-glutamine-binding positions include Arg-113 and 141–142 (IR). Active-site charge relay system residues include His-178 and Glu-180.

The protein belongs to the glutaminase PdxT/SNO family. In terms of assembly, in the presence of PdxS, forms a dodecamer of heterodimers. Only shows activity in the heterodimer.

The catalysed reaction is aldehydo-D-ribose 5-phosphate + D-glyceraldehyde 3-phosphate + L-glutamine = pyridoxal 5'-phosphate + L-glutamate + phosphate + 3 H2O + H(+). It carries out the reaction L-glutamine + H2O = L-glutamate + NH4(+). It functions in the pathway cofactor biosynthesis; pyridoxal 5'-phosphate biosynthesis. Its function is as follows. Catalyzes the hydrolysis of glutamine to glutamate and ammonia as part of the biosynthesis of pyridoxal 5'-phosphate. The resulting ammonia molecule is channeled to the active site of PdxS. In Pyrococcus abyssi (strain GE5 / Orsay), this protein is Pyridoxal 5'-phosphate synthase subunit PdxT.